The sequence spans 266 residues: DNA-directed RNA polymerase subunit Rpo3 (266 aa).

[3Fe-4S] cluster is bound by residues C205, C208, and C211.

The protein belongs to the archaeal Rpo3/eukaryotic RPB3 RNA polymerase subunit family. As to quaternary structure, part of the RNA polymerase complex. Requires [3Fe-4S] cluster as cofactor.

The protein localises to the cytoplasm. It catalyses the reaction RNA(n) + a ribonucleoside 5'-triphosphate = RNA(n+1) + diphosphate. Its function is as follows. DNA-dependent RNA polymerase (RNAP) catalyzes the transcription of DNA into RNA using the four ribonucleoside triphosphates as substrates. This is DNA-directed RNA polymerase subunit Rpo3 from Methanosarcina mazei (strain ATCC BAA-159 / DSM 3647 / Goe1 / Go1 / JCM 11833 / OCM 88) (Methanosarcina frisia).